The chain runs to 564 residues: Ell-associated factor Eaf (564 aa).

2 disordered regions span residues 179-255 (SGPG…MITD) and 270-564 (QANI…DDDD). The span at 186–205 (ENSTMRVSSKTKVSTGSRRN) shows a compositional bias: polar residues. Serine 215 is modified (phosphoserine). Residues 274–283 (SGSSTGSSSG) show a composition bias toward low complexity. Positions 297–309 (GKQRQAHGKRQQI) are enriched in basic residues. 3 stretches are compositionally biased toward low complexity: residues 315–329 (PPVQ…QQQP), 343–387 (QQQQ…QQRP), and 409–420 (ASQSVAQAAAVL). Over residues 438–453 (DSSDSDSGSDSDDSTE) the composition is skewed to acidic residues. 3 stretches are compositionally biased toward low complexity: residues 463 to 505 (EQQQ…NQLP), 523 to 533 (QQPQPQPQQQQ), and 546 to 564 (NDLL…DDDD).

This sequence belongs to the EAF family.

It is found in the nucleus. Functionally, promotes transcriptional elongation by Su(Tpl)/ELL. Essential for development. The protein is Ell-associated factor Eaf of Drosophila pseudoobscura pseudoobscura (Fruit fly).